The chain runs to 2367 residues: RNA1 polyprotein (2367 aa).

Residues 587–1194 (AKCEDLAVVS…GGRLLLILCS (608 aa)) are Cytoplasmic-facing. The SF3 helicase domain maps to 776 to 940 (ELRTLRNDMA…AGVAFNPHDS (165 aa)). 804–811 (GPPGVGKT) is a binding site for ATP. The helical transmembrane segment at 1195–1215 (CMLLGIACYTFFNALAILIGG) threads the bilayer. At 1216–1235 (TSVAAGAAAMVDIGACGSTS) the chain is on the lumenal side. The region spanning 1258-1468 (PAVWSEETGH…YVCKFPHIEV (211 aa)) is the Peptidase C3 domain. Active-site for picornain 3C-like protease activity residues include histidine 1302, glutamate 1339, and cysteine 1432. Residues 1832 to 1957 (DKMYCCDYSK…GIHPNIESAF (126 aa)) enclose the RdRp catalytic domain.

Belongs to the nepoviruses RNA1 polyprotein family. In terms of processing, specific enzymatic cleavages by picornain 3C-like protease in vivo yield mature proteins. Picornain 3C-like protease is autocatalytically processed. VPg is uridylylated by the polymerase and is covalently linked to the 5'-end of genomic RNA. This uridylylated form acts as a nucleotide-peptide primer for the polymerase.

Its subcellular location is the host endoplasmic reticulum lumen. It localises to the host endoplasmic reticulum membrane. The catalysed reaction is RNA(n) + a ribonucleoside 5'-triphosphate = RNA(n+1) + diphosphate. Picornain 3C-like protease is a thiol protease that cleaves the P1 and P2 polyproteins. In Fragaria vesca (Woodland strawberry), this protein is RNA1 polyprotein.